A 95-amino-acid polypeptide reads, in one-letter code: Co-chaperonin GroES (95 aa).

The protein belongs to the GroES chaperonin family. Heptamer of 7 subunits arranged in a ring. Interacts with the chaperonin GroEL.

It is found in the cytoplasm. Together with the chaperonin GroEL, plays an essential role in assisting protein folding. The GroEL-GroES system forms a nano-cage that allows encapsulation of the non-native substrate proteins and provides a physical environment optimized to promote and accelerate protein folding. GroES binds to the apical surface of the GroEL ring, thereby capping the opening of the GroEL channel. The chain is Co-chaperonin GroES from Bordetella avium (strain 197N).